Reading from the N-terminus, the 165-residue chain is Pro-MCH (165 aa).

The N-terminal stretch at 1–21 is a signal peptide; sequence MAKMNLSSYILILTFSLFSQG. The residue at position 143 (Ile143) is an Isoleucine amide. Cys153 and Cys162 form a disulfide bridge.

This sequence belongs to the melanin-concentrating hormone family. In terms of processing, differentially processed in the brain and in peripheral organs producing two neuropeptides; NEI and MCH. A third peptide, NGE, may also be produced. Preferential processing in neurons by prohormone convertase 2 (PC2) generates NEI. MCH is generated in neurons of the lateral hypothalmic area by several prohormone convertases including PC1/3, PC2 and PC5/6. In terms of tissue distribution, predominantly expressed in lateral hypothalamus, also detected in pallidum, neocortex and cerebellum. Also found in thymus, brown adipose tissue, duodenum and testis (spermatogonia, early spermatocytes and Sertoli cells). No expression in peripheral blood. In brain exclusively mature MCH and NEI peptides are present. In peripheral tissues a large product, encompassing the NEI and MCH domains of the precursor, is found predominantly.

It localises to the secreted. Its function is as follows. MCH may act as a neurotransmitter or neuromodulator in a broad array of neuronal functions directed toward the regulation of goal-directed behavior, such as food intake, and general arousal. May also have a role in spermatocyte differentiation. This chain is Pro-MCH (PMCH), found in Homo sapiens (Human).